Consider the following 463-residue polypeptide: Phosphomethylpyrimidine synthase (463 aa).

Substrate-binding positions include asparagine 80, methionine 109, tyrosine 138, histidine 173, 193–195, 234–237, and glutamate 273; these read SRG and DGLR. Histidine 277 lines the Zn(2+) pocket. Tyrosine 300 is a binding site for substrate. Histidine 341 lines the Zn(2+) pocket. Residues cysteine 421, cysteine 424, and cysteine 429 each contribute to the [4Fe-4S] cluster site.

This sequence belongs to the ThiC family. As to quaternary structure, homodimer. The cofactor is [4Fe-4S] cluster.

The enzyme catalyses 5-amino-1-(5-phospho-beta-D-ribosyl)imidazole + S-adenosyl-L-methionine = 4-amino-2-methyl-5-(phosphooxymethyl)pyrimidine + CO + 5'-deoxyadenosine + formate + L-methionine + 3 H(+). It functions in the pathway cofactor biosynthesis; thiamine diphosphate biosynthesis. In terms of biological role, catalyzes the synthesis of the hydroxymethylpyrimidine phosphate (HMP-P) moiety of thiamine from aminoimidazole ribotide (AIR) in a radical S-adenosyl-L-methionine (SAM)-dependent reaction. This Anaeromyxobacter dehalogenans (strain 2CP-1 / ATCC BAA-258) protein is Phosphomethylpyrimidine synthase.